We begin with the raw amino-acid sequence, 367 residues long: 3-methyl-2-oxobutanoate dehydrogenase subunit alpha (367 aa).

Thiamine diphosphate-binding positions include 99-101, 141-142, 170-176, 200-204, and His269; these read QYR, PI, GDGATSE, and NQWAI. Residue Tyr100 participates in substrate binding. Mg(2+) is bound by residues Asp171 and Asn200.

As to quaternary structure, heteromer of E1 alpha (BkdA) and beta (BkdB) subunits. Part of the BCKADH complex, consisting of multiple copies of BkdA/BkdB (E1), BkdC (E2) and Lpd (E3). Requires Mg(2+) as cofactor. Thiamine diphosphate serves as cofactor.

It carries out the reaction N(6)-[(R)-lipoyl]-L-lysyl-[protein] + 3-methyl-2-oxobutanoate + H(+) = N(6)-[(R)-S(8)-2-methylpropanoyldihydrolipoyl]-L-lysyl-[protein] + CO2. Functionally, component of the branched-chain alpha-ketoacid dehydrogenase (BCKADH) complex, that catalyzes the overall conversion of branched-chain alpha-ketoacids to acyl-CoA and CO(2). This Mycobacterium tuberculosis (strain CDC 1551 / Oshkosh) protein is 3-methyl-2-oxobutanoate dehydrogenase subunit alpha (bkdA).